The following is a 356-amino-acid chain: D-alanine--D-alanine ligase (356 aa).

In terms of domain architecture, ATP-grasp spans 134-339 (KQLFATRGLP…YSELITDLIN (206 aa)). 167–222 (EGKLTYPVFVKPANLGSSVGISKCTDSETLIHGIEEALQFDRKLVIEQGVNAREVE) is a binding site for ATP. Asp-293, Glu-306, and Asn-308 together coordinate Mg(2+).

Belongs to the D-alanine--D-alanine ligase family. Mg(2+) serves as cofactor. The cofactor is Mn(2+).

It is found in the cytoplasm. The catalysed reaction is 2 D-alanine + ATP = D-alanyl-D-alanine + ADP + phosphate + H(+). The protein operates within cell wall biogenesis; peptidoglycan biosynthesis. In terms of biological role, cell wall formation. The chain is D-alanine--D-alanine ligase from Macrococcus caseolyticus (strain JCSC5402) (Macrococcoides caseolyticum).